The following is a 301-amino-acid chain: Protein RESTRICTED TEV MOVEMENT 3 (301 aa).

The MATH domain occupies 6-134 (DKKITWTIKN…NGELKIVVEI (129 aa)). The stretch at 235-289 (KLDWLEKKLYEVSEKKENEEASETGLQEMEEELKDMKQKCLEMEALVEKEKAKVS) forms a coiled coil.

As to quaternary structure, self-interacts. Interacts with RTM1.

Required for the restriction of long-distance movement of the pathogenic tobacco etch virus (TEV) without causing a hypersensitive response or inducing systemic acquired resistance. The sequence is that of Protein RESTRICTED TEV MOVEMENT 3 (RTM3) from Arabidopsis thaliana (Mouse-ear cress).